Here is a 522-residue protein sequence, read N- to C-terminus: ATP synthase subunit alpha 2 (522 aa).

176-183 contributes to the ATP binding site; that stretch reads GDRQTGKT.

It belongs to the ATPase alpha/beta chains family. F-type ATPases have 2 components, CF(1) - the catalytic core - and CF(0) - the membrane proton channel. CF(1) has five subunits: alpha(3), beta(3), gamma(1), delta(1), epsilon(1). CF(0) has three main subunits: a(1), b(2) and c(9-12). The alpha and beta chains form an alternating ring which encloses part of the gamma chain. CF(1) is attached to CF(0) by a central stalk formed by the gamma and epsilon chains, while a peripheral stalk is formed by the delta and b chains.

The protein resides in the cell inner membrane. The catalysed reaction is ATP + H2O + 4 H(+)(in) = ADP + phosphate + 5 H(+)(out). Its function is as follows. Produces ATP from ADP in the presence of a proton gradient across the membrane. The alpha chain is a regulatory subunit. This is ATP synthase subunit alpha 2 from Syntrophotalea carbinolica (strain DSM 2380 / NBRC 103641 / GraBd1) (Pelobacter carbinolicus).